The primary structure comprises 300 residues: Bifunctional protein FolD (300 aa).

NADP(+)-binding positions include 168 to 170 (GRS), Ser193, and Ile234.

The protein belongs to the tetrahydrofolate dehydrogenase/cyclohydrolase family. Homodimer.

The enzyme catalyses (6R)-5,10-methylene-5,6,7,8-tetrahydrofolate + NADP(+) = (6R)-5,10-methenyltetrahydrofolate + NADPH. It catalyses the reaction (6R)-5,10-methenyltetrahydrofolate + H2O = (6R)-10-formyltetrahydrofolate + H(+). It participates in one-carbon metabolism; tetrahydrofolate interconversion. Catalyzes the oxidation of 5,10-methylenetetrahydrofolate to 5,10-methenyltetrahydrofolate and then the hydrolysis of 5,10-methenyltetrahydrofolate to 10-formyltetrahydrofolate. The sequence is that of Bifunctional protein FolD from Ehrlichia canis (strain Jake).